The following is a 696-amino-acid chain: Glycine--tRNA ligase beta subunit (696 aa).

The protein belongs to the class-II aminoacyl-tRNA synthetase family. In terms of assembly, tetramer of two alpha and two beta subunits.

The protein resides in the cytoplasm. The catalysed reaction is tRNA(Gly) + glycine + ATP = glycyl-tRNA(Gly) + AMP + diphosphate. The sequence is that of Glycine--tRNA ligase beta subunit from Nitratidesulfovibrio vulgaris (strain ATCC 29579 / DSM 644 / CCUG 34227 / NCIMB 8303 / VKM B-1760 / Hildenborough) (Desulfovibrio vulgaris).